A 264-amino-acid chain; its full sequence is 3'-5' ssDNA/RNA exonuclease TatD (264 aa).

A divalent metal cation contacts are provided by E92, H128, and H153.

Belongs to the metallo-dependent hydrolases superfamily. TatD-type hydrolase family. TatD subfamily. Monomer. Mg(2+) is required as a cofactor.

Its subcellular location is the cytoplasm. 3'-5' exonuclease that prefers single-stranded DNA and RNA. May play a role in the H(2)O(2)-induced DNA damage repair. In Dickeya dadantii (strain 3937) (Erwinia chrysanthemi (strain 3937)), this protein is 3'-5' ssDNA/RNA exonuclease TatD.